Reading from the N-terminus, the 217-residue chain is Ribosomal RNA small subunit methyltransferase G (217 aa).

Residues G76, F81, 128–129, and R142 each bind S-adenosyl-L-methionine; that span reads LE.

The protein belongs to the methyltransferase superfamily. RNA methyltransferase RsmG family.

It localises to the cytoplasm. The enzyme catalyses guanosine(527) in 16S rRNA + S-adenosyl-L-methionine = N(7)-methylguanosine(527) in 16S rRNA + S-adenosyl-L-homocysteine. Its function is as follows. Specifically methylates the N7 position of guanine in position 527 of 16S rRNA. The protein is Ribosomal RNA small subunit methyltransferase G of Rhizorhabdus wittichii (strain DSM 6014 / CCUG 31198 / JCM 15750 / NBRC 105917 / EY 4224 / RW1) (Sphingomonas wittichii).